The sequence spans 370 residues: NADH-quinone oxidoreductase subunit D (370 aa).

The protein belongs to the complex I 49 kDa subunit family. NDH-1 is composed of 14 different subunits. Subunits NuoB, C, D, E, F, and G constitute the peripheral sector of the complex.

Its subcellular location is the cell membrane. The catalysed reaction is a quinone + NADH + 5 H(+)(in) = a quinol + NAD(+) + 4 H(+)(out). NDH-1 shuttles electrons from NADH, via FMN and iron-sulfur (Fe-S) centers, to quinones in the respiratory chain. The immediate electron acceptor for the enzyme in this species is believed to be a menaquinone. Couples the redox reaction to proton translocation (for every two electrons transferred, four hydrogen ions are translocated across the cytoplasmic membrane), and thus conserves the redox energy in a proton gradient. The protein is NADH-quinone oxidoreductase subunit D of Clostridium beijerinckii (strain ATCC 51743 / NCIMB 8052) (Clostridium acetobutylicum).